The chain runs to 205 residues: Alpha-1-acid glycoprotein (205 aa).

An N-terminal signal peptide occupies residues 1-18 (MALHMVLVVLSLLPLLEA). N-linked (GlcNAc...) asparagine glycosylation is found at asparagine 25, asparagine 34, asparagine 76, asparagine 94, asparagine 104, and asparagine 134. Residues cysteine 91 and cysteine 183 are joined by a disulfide bond.

Belongs to the calycin superfamily. Lipocalin family.

It is found in the secreted. Its function is as follows. Functions as a transport protein in the blood stream. Binds various ligands in the interior of its beta-barrel domain. Appears to function in modulating the activity of the immune system during the acute-phase reaction. This chain is Alpha-1-acid glycoprotein (Orm1), found in Rattus norvegicus (Rat).